We begin with the raw amino-acid sequence, 122 residues long: Small ribosomal subunit protein uS13 (122 aa).

The interval 96-122 (LPCRGQRTHTNARTRKGPRKPIAGKKK) is disordered.

This sequence belongs to the universal ribosomal protein uS13 family. As to quaternary structure, part of the 30S ribosomal subunit. Forms a loose heterodimer with protein S19. Forms two bridges to the 50S subunit in the 70S ribosome.

Functionally, located at the top of the head of the 30S subunit, it contacts several helices of the 16S rRNA. In the 70S ribosome it contacts the 23S rRNA (bridge B1a) and protein L5 of the 50S subunit (bridge B1b), connecting the 2 subunits; these bridges are implicated in subunit movement. Contacts the tRNAs in the A and P-sites. This Magnetococcus marinus (strain ATCC BAA-1437 / JCM 17883 / MC-1) protein is Small ribosomal subunit protein uS13.